The primary structure comprises 170 residues: Flavodoxin (170 aa).

Residues 4–165 form the Flavodoxin-like domain; sequence IGLFYGTQTG…RIKTWVSQLK (162 aa).

Belongs to the flavodoxin family. The cofactor is FMN.

Low-potential electron donor to a number of redox enzymes. This Synechococcus elongatus (strain ATCC 33912 / PCC 7942 / FACHB-805) (Anacystis nidulans R2) protein is Flavodoxin (isiB).